The following is a 273-amino-acid chain: MKNELIKIKSILPLQKAPLVHCITNDITLETVANTILYLGGKPIMSSDTREFSSLFQSTDALLLNMGRLNESHEQSLSQASSLADMTKKPTVVDLVGYGITNERTKLGMAMARNHPTVIKGNTSEIRRFVGLPSLAKGIDGASSDQHDQALKDLILSLKQITTEYADTVFVATGKKDVIVQNDKHLILSNGVDELDKFVGTGDMVGAIITTLLAVGEDPWVASQFAISYLNVAAEKALSLTNGMENFRREVLNQIDLLGRNQQWATKIKYSNF.

Position 45 (methionine 45) interacts with substrate. ATP contacts are provided by lysine 120 and threonine 173. Glycine 200 serves as a coordination point for substrate.

The protein belongs to the Thz kinase family. Requires Mg(2+) as cofactor.

The enzyme catalyses 5-(2-hydroxyethyl)-4-methylthiazole + ATP = 4-methyl-5-(2-phosphooxyethyl)-thiazole + ADP + H(+). It participates in cofactor biosynthesis; thiamine diphosphate biosynthesis; 4-methyl-5-(2-phosphoethyl)-thiazole from 5-(2-hydroxyethyl)-4-methylthiazole: step 1/1. Its function is as follows. Catalyzes the phosphorylation of the hydroxyl group of 4-methyl-5-beta-hydroxyethylthiazole (THZ). This is Hydroxyethylthiazole kinase 2 from Leuconostoc mesenteroides subsp. mesenteroides (strain ATCC 8293 / DSM 20343 / BCRC 11652 / CCM 1803 / JCM 6124 / NCDO 523 / NBRC 100496 / NCIMB 8023 / NCTC 12954 / NRRL B-1118 / 37Y).